Consider the following 1738-residue polypeptide: Gag-Pol polyprotein (1738 aa).

The N-myristoyl glycine; by host moiety is linked to residue G2. A PTAP/PSAP motif motif is present at residues 111–114 (PSAP). Pro residues predominate over residues 111–124 (PSAPSLPPEPPLST). Positions 111 to 218 (PSAPSLPPEP…STTSQAFPLR (108 aa)) are disordered. The LYPX(n)L motif signature appears at 130–134 (LYPAL). A compositionally biased stretch (pro residues) spans 161 to 173 (DPPPYRDPGPPSP). The short motif at 162–165 (PPPY) is the PPXY motif element. Phosphoserine; by host is present on S192. The segment at 345–393 (GRSPTNLAKVKGITQGPNESPSAFLERLKEAYRRYTPYDPEDPGQETNV) is interaction with host PIAS4. The interval 430–435 (IFNKRE) is interaction with host UBE2I. Basic and acidic residues-rich tracts occupy residues 434 to 466 (RETPEEREERVRRETEEKEERRRAEDERREKER) and 486 to 499 (RQDRQGGERRRPQL). 2 disordered regions span residues 434-499 (RETP…RPQL) and 513-552 (WARDCPKKPRGPRGPRPQASLLTLDDQGGQGQEPPPEPRI). Residues 438–478 (EEREERVRRETEEKEERRRAEDERREKERDRRRHREMSKLL) adopt a coiled-coil conformation. Residues 502–519 (DQCAYCKEKGHWARDCPK) form a CCHC-type zinc finger. Residues 561–631 (VTFLVDTGAQ…CPYPLLGRDL (71 aa)) enclose the Peptidase A2 domain. The Protease; shared with dimeric partner role is filled by D566. One can recognise a Reverse transcriptase domain in the interval 741–932 (LDQGILVPCQ…KQVKYLGYLL (192 aa)). Positions 809, 883, 884, 1183, 1221, 1242, and 1312 each coordinate Mg(2+). Positions 1174-1320 (PDADHTWYTD…ADQAAREVAT (147 aa)) constitute an RNase H type-1 domain. The HHCC-type zinc-finger motif lies at 1387 to 1427 (HQLTHLSFSKTKALLERSYSPYYMLNRDRTLKDITETCKAC). Residues 1444–1602 (RGHRPGTHWE…TPYEILYGAP (159 aa)) form the Integrase catalytic domain. Residues D1455 and D1514 each contribute to the Mg(2+) site.

This sequence belongs to the retroviral Pol polyprotein family. Homohexamer; further associates as homomultimer. The virus core is composed of a lattice formed from hexagonal rings, each containing six capsid monomers. Interacts with mouse UBE2I and mouse PIAS4. As to quaternary structure, interacts (via PPXY motif) with host NEDD4. Interacts (via PSAP motif) with host TSG101. Interacts (via LYPX(n)L motif) with host PDCD6IP. In terms of assembly, the reverse transcriptase is a monomer (Potential). Interacts (via RNase domains) with host release factor ETF1; this interaction is essential for translational readthrough of amber codon between viral gag and pol genes, as well as for viral replication. Homodimer. Mg(2+) serves as cofactor. Post-translationally, ubiquitinated by ITCH. Gag can recruit the ubiquitin ligase Itch in an L domain-independent manner to facilitate virus release via a mechanism that involves Gag ubiquitination. In terms of processing, specific enzymatic cleavages by the viral protease yield mature proteins. The protease is released by autocatalytic cleavage. The polyprotein is cleaved during and after budding, this process is termed maturation. Sumoylated; which is required for virus replication. Post-translationally, phosphorylated on serine residues.

The protein resides in the virion. It is found in the host cell membrane. It localises to the host late endosome membrane. The protein localises to the host endosome. Its subcellular location is the host multivesicular body. The protein resides in the host cytoplasm. The enzyme catalyses DNA(n) + a 2'-deoxyribonucleoside 5'-triphosphate = DNA(n+1) + diphosphate. It carries out the reaction Endonucleolytic cleavage to 5'-phosphomonoester.. Most efficiently inhibited by Amprenavir, which is able to block Gag-Pol processing in infected cells. Plays a role in budding and is processed by the viral protease during virion maturation outside the cell. During budding, it recruits, in a PPXY-dependent or independent manner, Nedd4-like ubiquitin ligases that conjugate ubiquitin molecules to Gag-Pol, or to Gag-Pol binding host factors. Interaction with HECT ubiquitin ligases probably links the viral protein to the host ESCRT pathway and facilitates release. Functionally, targets Gag and gag-pol polyproteins to the plasma membrane via a multipartite membrane binding signal, that includes its myristoylated N-terminus. Also mediates nuclear localization of the pre-integration complex. In terms of biological role, constituent of the pre-integration complex (PIC) which tethers the latter to mitotic chromosomes. This allows the integration of the viral genome into the host DNA. Its function is as follows. Forms the spherical core of the virion that encapsulates the genomic RNA-nucleocapsid complex. Involved in the packaging and encapsidation of two copies of the genome. Binds with high affinity to conserved UCUG elements within the packaging signal, located near the 5'-end of the genome. This binding is dependent on genome dimerization. Acts as a nucleic acid chaperone which is involved in rearrangement of nucleic acid secondary structures during gRNA retrotranscription. Functionally, the aspartyl protease mediates proteolytic cleavages of Gag and Gag-Pol polyproteins during or shortly after the release of the virion from the plasma membrane. Cleavages take place as an ordered, step-wise cascade to yield mature proteins. This process is called maturation. Displays maximal activity during the budding process just prior to particle release from the cell (Potential). Cleaves the translation initiation factor eIF4G leading to the inhibition of host cap-dependent translation. In terms of biological role, RT is a multifunctional enzyme that converts the viral dimeric RNA genome into dsDNA in the cytoplasm, shortly after virus entry into the cell. This enzyme displays a DNA polymerase activity that can copy either DNA or RNA templates, and a ribonuclease H (RNase H) activity that cleaves the RNA strand of RNA-DNA heteroduplexes in a partially processive 3' to 5' endonucleasic mode. Conversion of viral genomic RNA into dsDNA requires many steps. A tRNA binds to the primer-binding site (PBS) situated at the 5' end of the viral RNA. RT uses the 3' end of the tRNA primer to perform a short round of RNA-dependent minus-strand DNA synthesis. The reading proceeds through the U5 region and ends after the repeated (R) region which is present at both ends of viral RNA. The portion of the RNA-DNA heteroduplex is digested by the RNase H, resulting in a ssDNA product attached to the tRNA primer. This ssDNA/tRNA hybridizes with the identical R region situated at the 3' end of viral RNA. This template exchange, known as minus-strand DNA strong stop transfer, can be either intra- or intermolecular. RT uses the 3' end of this newly synthesized short ssDNA to perform the RNA-dependent minus-strand DNA synthesis of the whole template. RNase H digests the RNA template except for a polypurine tract (PPT) situated at the 5' end of the genome. It is not clear if both polymerase and RNase H activities are simultaneous. RNase H probably can proceed both in a polymerase-dependent (RNA cut into small fragments by the same RT performing DNA synthesis) and a polymerase-independent mode (cleavage of remaining RNA fragments by free RTs). Secondly, RT performs DNA-directed plus-strand DNA synthesis using the PPT that has not been removed by RNase H as primers. PPT and tRNA primers are then removed by RNase H. The 3' and 5' ssDNA PBS regions hybridize to form a circular dsDNA intermediate. Strand displacement synthesis by RT to the PBS and PPT ends produces a blunt ended, linear dsDNA copy of the viral genome that includes long terminal repeats (LTRs) at both ends. Its function is as follows. Catalyzes viral DNA integration into the host chromosome, by performing a series of DNA cutting and joining reactions. This enzyme activity takes place after virion entry into a cell and reverse transcription of the RNA genome in dsDNA. The first step in the integration process is 3' processing. This step requires a complex comprising the viral genome, matrix protein and integrase. This complex is called the pre-integration complex (PIC). The integrase protein removes 2 nucleotides from each 3' end of the viral DNA, leaving recessed CA OH's at the 3' ends. In the second step that requires cell division, the PIC enters cell nucleus. In the third step, termed strand transfer, the integrase protein joins the previously processed 3' ends to the 5' ends of strands of target cellular DNA at the site of integration. The last step is viral DNA integration into host chromosome. In Friend murine leukemia virus (isolate PVC-211) (FrMLV), this protein is Gag-Pol polyprotein (pol).